An 84-amino-acid chain; its full sequence is Beta-cardiotoxin CTX23 (84 aa).

An N-terminal signal peptide occupies residues 1–21; that stretch reads MKTLLLTLVVVTIVCLDLGYT. Disulfide bonds link Cys-24/Cys-43, Cys-36/Cys-61, Cys-65/Cys-76, and Cys-77/Cys-82.

The protein belongs to the three-finger toxin family. Short-chain subfamily. Aminergic toxin sub-subfamily. As to expression, expressed by the venom gland.

It localises to the secreted. Its function is as follows. Acts as a beta-blocker by binding to beta-1 and beta-2 adrenergic receptors (ADRB1 and ADRB2). It dose-dependently decreases the heart rate (bradycardia), whereas conventional cardiotoxins increases it. At 100 mg/kg, intraperitoneal injection into mice provokes labored breathing, impaired locomotion, lack of response to external stimuli, and death (after 30 minutes). This is Beta-cardiotoxin CTX23 from Ophiophagus hannah (King cobra).